Consider the following 241-residue polypeptide: Orotidine 5'-phosphate decarboxylase (241 aa).

Residues Asp16, Lys37, 64–73 (DLKFHDIPTT), Thr128, Arg190, Gln199, Gly219, and Arg220 contribute to the substrate site. Catalysis depends on Lys66, which acts as the Proton donor.

The protein belongs to the OMP decarboxylase family. Type 1 subfamily. Homodimer.

The catalysed reaction is orotidine 5'-phosphate + H(+) = UMP + CO2. Its pathway is pyrimidine metabolism; UMP biosynthesis via de novo pathway; UMP from orotate: step 2/2. Catalyzes the decarboxylation of orotidine 5'-monophosphate (OMP) to uridine 5'-monophosphate (UMP). This is Orotidine 5'-phosphate decarboxylase from Prochlorococcus marinus (strain NATL1A).